A 391-amino-acid polypeptide reads, in one-letter code: Acetylgalactosaminyl-O-glycosyl-glycoprotein beta-1,3-N-acetylglucosaminyltransferase (391 aa).

The Cytoplasmic segment spans residues 1 to 11 (MALPSSRRFKS). The helical; Signal-anchor for type II membrane protein transmembrane segment at 12–32 (PTTLAFFLVGVTLVVLNQWFL) threads the bilayer. Residues 33–391 (QEHRQEKAKG…TAGEQNPDAH (359 aa)) are Lumenal-facing. Residues Asn-68 and Asn-191 are each glycosylated (N-linked (GlcNAc...) asparagine).

It belongs to the glycosyltransferase 31 family.

It localises to the golgi apparatus membrane. It carries out the reaction a 3-O-[N-acetyl-alpha-D-galactosaminyl]-L-threonyl-[protein] + UDP-N-acetyl-alpha-D-glucosamine = a 3-O-[N-acetyl-beta-D-glucosaminyl-(1-&gt;3)-N-acetyl-alpha-D-galactosaminyl]-L-threonyl-[protein] + UDP + H(+). It catalyses the reaction a 3-O-[N-acetyl-alpha-D-galactosaminyl]-L-seryl-[protein] + UDP-N-acetyl-alpha-D-glucosamine = 3-O-[N-acetyl-beta-D-glucosaminyl-(1-&gt;3)-N-acetyl-alpha-D-galactosaminyl]-L-seryl-[protein] + UDP + H(+). The protein operates within protein modification; protein glycosylation. Functionally, beta-1,3-N-acetylglucosaminyltransferase that synthesizes the core 3 structure of the O-glycan, an important precursor in the biosynthesis of mucin-type glycoproteins. Plays an important role in the synthesis of mucin-type O-glycans in digestive organs. This is Acetylgalactosaminyl-O-glycosyl-glycoprotein beta-1,3-N-acetylglucosaminyltransferase (B3gnt6) from Mus musculus (Mouse).